The following is a 213-amino-acid chain: MSDEKKPEAETSESLQKREEKLAETLASEPAAQGEAEDAAAAGPDVAALEAEISDLRNRLLRAAADMENNRKRAEREKQDAQRYAAANFARDMLEVSDNLRRAIATLKEDERAEAAESVKAMIEGVEMTDRQLVTIFERHGIREITPQPGERFDPNLHEAMFEVPGTDQPAGTVVHVLGAGYMIGDRLLRAARVGVAKADDGAAKGGKVDTIA.

The segment covering 1-23 (MSDEKKPEAETSESLQKREEKLA) has biased composition (basic and acidic residues). The interval 1–43 (MSDEKKPEAETSESLQKREEKLAETLASEPAAQGEAEDAAAAG) is disordered. Low complexity predominate over residues 29 to 43 (EPAAQGEAEDAAAAG).

It belongs to the GrpE family. In terms of assembly, homodimer.

Its subcellular location is the cytoplasm. In terms of biological role, participates actively in the response to hyperosmotic and heat shock by preventing the aggregation of stress-denatured proteins, in association with DnaK and GrpE. It is the nucleotide exchange factor for DnaK and may function as a thermosensor. Unfolded proteins bind initially to DnaJ; upon interaction with the DnaJ-bound protein, DnaK hydrolyzes its bound ATP, resulting in the formation of a stable complex. GrpE releases ADP from DnaK; ATP binding to DnaK triggers the release of the substrate protein, thus completing the reaction cycle. Several rounds of ATP-dependent interactions between DnaJ, DnaK and GrpE are required for fully efficient folding. The chain is Protein GrpE from Parvibaculum lavamentivorans (strain DS-1 / DSM 13023 / NCIMB 13966).